Reading from the N-terminus, the 1826-residue chain is MGDSKVKVAVRIRPMNRRETDLHTKCVVDVDANKVILNPVNTNLSKGDARGQPKVFAYDHCFWSMDESVKEKYAGQDIVFKCLGENILQNAFDGYNACIFAYGQTGSGKSYTMMGTADQPGLIPRLCSGLFERTQKEENEEQSFKVEVSYMEIYNEKVRDLLDPKGSRQTLKVREHSVLGPYVDGLSKLAVTSYKDIESLMSEGNKSRTVAATNMNEESSRSHAVFKITLTHTLYDVKSGTSGEKVGKLSLVDLAGSERATKTGAAGDRLKEGSNINKSLTTLGLVISALADQSAGKNKNKFVPYRDSVLTWLLKDSLGGNSKTAMVATVSPAADNYDETLSTLRYADRAKHIVNHAVVNEDPNARIIRDLREEVEKLREQLTKAEAMKSPELKDRLEESEKLIQEMTVTWEEKLRKTEEIAQERQKQLESLGISLQSSGIKVGDDKCFLVNLNADPALNELLVYYLKEHTLIGSANSQDIQLCGMGILPEHCIIDITSEGQVMLTPQKNTRTFVNGSSVSSPIQLHHGDRILWGNNHFFRLNLPKKKKKAEREDEDQDPSMKNENSSEQLDVDGDSSSEVSSEVNFNYEYAQMEVTMKALGSNDPMQSILNSLEQQHEEEKRSALERQRLMYEHELEQLRRRLSPEKQNCRSMDRFSFHSPSAQQRLRQWAEEREATLNNSLMRLREQIVKANLLVREANYIAEELDKRTEYKVTLQIPASSLDANRKRGSLLSEPAIQVRRKGKGKQIWSLEKLDNRLLDMRDLYQEWKECEEDNPVIRSYFKRADPFYDEQENHSLIGVANVFLESLFYDVKLQYAVPIINQKGEVAGRLHVEVMRLSGDVGERIAGGDEVAEVSFEKETQENKLVCMVKILQATGLPQHLSHFVFCKYSFWDQQEPVIVAPEVDTSSSSVSKEPHCMVVFDHCNEFSVNITEDFIEHLSEGALAIEVYGHKINDPRKNPALWDLGIIQAKTRSLRDRWSEVTRKLEFWVQILEQNENGEYCPVEVISAKDVPTGGIFQLRQGQSRRVQVEVKSVQESGTLPLMEECILSVGIGCVKVRPLRAPRTHETFHEEEEDMDSYQDRDLERLRRKWLNALTKRQEYLDQQLQKLVSKRDKTEDDADREAQLLEMRLTLTEERNAVMVPSAGSGIPGAPAEWTPVPGMETHIPVIFLDLNADDFSSQDNLDDPEAGGWDATLTGEEEEEFFELQIVKQHDGEVKAEASWDSAVHGCPQLSRGTPVDERLFLIVRVTVQLSHPADMQLVLRKRICVNVHGRQGFAQSLLKKMSHRSSIPGCGVTFEIVSNIPEDAQGVEEREALARMAANVENPASADSEAYIEKYLRSVLAVENLLTLDRLRQEVAVKEQLTGKGKLSRRSISSPNVNRLSGSRQDLIPSYSLGSNKGRWESQQDVSQTTVSRGIAPAPALSVSPQNNHSPDPGLSNLAASYLNPVKSFVPQMPKLLKSLFPVRDEKRGKRPSPLAHQPVPRIMVQSASPDIRVTRMEEAQPEMGPDVLVQTMGAPALKICDKPAKVPSPPPVIAVTAVTPAPEAQDGPPSPLSEASSGYFSHSVSTATLSDALGPGLDAAAPPGSMPTAPEAEPEAPISHPPPPTAVPAEEPPGPQQLVSPGRERPDLEAPAPGSPFRVRRVRASELRSFSRMLAGDPGCSPGAEGNAPAPGAGGQALASDSEEADEVPEWLREGEFVTVGAHKTGVVRYVGPADFQEGTWVGVELDLPSGKNDGSIGGKQYFRCNPGYGLLVRPSRVRRATGPVRRRSTGLRLGAPEARRSATLSGSATNLASLTAALAKADRSHKNPENRKSWAS.

Residues 5–353 (KVKVAVRIRP…LRYADRAKHI (349 aa)) form the Kinesin motor domain. 103 to 110 (GQTGSGKS) contacts ATP. The stretch at 364–439 (NARIIRDLRE…ESLGISLQSS (76 aa)) forms a coiled coil. Residues 471-535 (TLIGSANSQD…LHHGDRILWG (65 aa)) form the FHA domain. The segment at 546–582 (KKKKKAEREDEDQDPSMKNENSSEQLDVDGDSSSEVS) is disordered. Over residues 561–570 (SMKNENSSEQ) the composition is skewed to polar residues. Coiled-coil stretches lie at residues 607–710 (MQSI…LDKR), 752–772 (SLEK…EWKE), and 1096–1143 (LNAL…ERNA). Serine 661 bears the Phosphoserine mark. The tract at residues 1367-1420 (EQLTGKGKLSRRSISSPNVNRLSGSRQDLIPSYSLGSNKGRWESQQDVSQTTVS) is disordered. 2 stretches are compositionally biased toward polar residues: residues 1378–1392 (RSIS…SGSR) and 1409–1420 (ESQQDVSQTTVS). The residue at position 1379 (serine 1379) is a Phosphoserine. Position 1381 is a phosphoserine; by MARK2 (serine 1381). Residues serine 1382 and serine 1391 each carry the phosphoserine modification. At serine 1410 the chain carries Phosphoserine; by MARK2. Phosphoserine is present on residues serine 1432, serine 1438, and serine 1537. Phosphothreonine is present on threonine 1545. Serine 1559 is subject to Phosphoserine. Over residues 1579 to 1607 (SDALGPGLDAAAPPGSMPTAPEAEPEAPI) the composition is skewed to low complexity. 2 disordered regions span residues 1579 to 1650 (SDAL…RVRR) and 1662 to 1698 (MLAG…DEVP). A compositionally biased stretch (pro residues) spans 1608 to 1624 (SHPPPPTAVPAEEPPGP). Serine 1644 is modified (phosphoserine). Residues 1671-1688 (PGAEGNAPAPGAGGQALA) are compositionally biased toward low complexity. A CAP-Gly domain is found at 1721 to 1763 (GPADFQEGTWVGVELDLPSGKNDGSIGGKQYFRCNPGYGLLVR). Residue serine 1797 is modified to Phosphoserine.

The protein belongs to the TRAFAC class myosin-kinesin ATPase superfamily. Kinesin family. In terms of assembly, binds to DLG1 and DLG4. Interacts (when phosphorylated at Ser-1381 and Ser-1410) with 14-3-3. In terms of processing, phosphorylated at Ser-1381 and Ser-1410 by MARK2, promoting interaction with 14-3-3 and inhibiting microtubule-dependent accumulation and formation of axons. Ubiquitous.

Its subcellular location is the cytoplasm. It localises to the cytoskeleton. The protein resides in the cell projection. The protein localises to the axon. Its function is as follows. Involved in reorganization of the cortical cytoskeleton. Regulates axon formation by promoting the formation of extra axons. May be functionally important for the intracellular trafficking of MAGUKs and associated protein complexes. The polypeptide is Kinesin-like protein KIF13B (KIF13B) (Homo sapiens (Human)).